A 92-amino-acid polypeptide reads, in one-letter code: UPF0235 protein PF1765 (92 aa).

It belongs to the UPF0235 family.

In Pyrococcus furiosus (strain ATCC 43587 / DSM 3638 / JCM 8422 / Vc1), this protein is UPF0235 protein PF1765.